A 20-amino-acid chain; its full sequence is Lysozyme (20 aa).

In terms of assembly, monomer.

It is found in the secreted. It catalyses the reaction Hydrolysis of (1-&gt;4)-beta-linkages between N-acetylmuramic acid and N-acetyl-D-glucosamine residues in a peptidoglycan and between N-acetyl-D-glucosamine residues in chitodextrins.. Functionally, has bacteriolytic activity. This Lysobacter sp. (strain XL1) protein is Lysozyme.